A 224-amino-acid polypeptide reads, in one-letter code: MSVVITIDGPSGSGKGTICRLIAEASGFELLDSGALYRLTALATVEQGANSADEQQVAGIAASLDIKFIPQEGSTQVMLAGKDVTKAIRAEEIGMLASTVAAYPAVRQALLDRQRAFLTAKGLVADGRDMGTVVFPAAPLKIFLTASAQERANRRVKQLEQAGVASINYEQILSDIEKRDEQDRNRATAPLLPADDAVMLDSTALSIDEVKQQILGLAKARQLF.

9-17 contributes to the ATP binding site; that stretch reads GPSGSGKGT.

Belongs to the cytidylate kinase family. Type 1 subfamily.

It is found in the cytoplasm. It carries out the reaction CMP + ATP = CDP + ADP. It catalyses the reaction dCMP + ATP = dCDP + ADP. The protein is Cytidylate kinase of Saccharophagus degradans (strain 2-40 / ATCC 43961 / DSM 17024).